The following is a 604-amino-acid chain: NRPS-independent siderophore synthetase-like protein ankE (604 aa).

The catalysed reaction is cyclo(L-arginyl-(Z)-dehydro-4-O-homoseryl-tyrosyl) + citrate + ATP = NK13650 B + AMP + diphosphate + H(+). It participates in secondary metabolite biosynthesis. NRPS-independent siderophore synthetase-like protein; part of the ank cluster that mediates the biosynthesis of NK13650 C, a highly modified cyclo-arginine-tyrosine dipeptide. AnkE is responsible of the production of NK13650 B via ligation of citrate to the ankD product. Within the pathway, the cyclodipeptide synthase ankA acts as the scaffold-generating enzyme and is responsible for formation of the cyclo-Arg-Tyr diketopiperazine (cRY) from L-Arg and L-Tyr. The ankA product cRY is desaturated by the cytochrome P450 monooxygenase ankB to yield a dehydro-cyclodipeptide intermediate. The FAD-dependent monooxygenase ankC then installs the m-OH, ankD catalyzes the attachment of L-homoserine, and ankE ligates citrate to the ankD product to yield NK13650 B. The O-methyltransferase ankF is responsible for methylation of the C-17 phenol group of NK13650 B to produce NK13650 D. Amidation of NK13650 D with L-Asp by ankG then leads to the production of NK13650 C, whereas amidation of NK13650 B produces NK13650 A. The protein is NRPS-independent siderophore synthetase-like protein ankE of Aspergillus thermomutatus (Neosartorya pseudofischeri).